A 97-amino-acid chain; its full sequence is Exodeoxyribonuclease 7 small subunit (97 aa).

The interval methionine 1 to asparagine 22 is disordered.

It belongs to the XseB family. Heterooligomer composed of large and small subunits.

The protein resides in the cytoplasm. The catalysed reaction is Exonucleolytic cleavage in either 5'- to 3'- or 3'- to 5'-direction to yield nucleoside 5'-phosphates.. Its function is as follows. Bidirectionally degrades single-stranded DNA into large acid-insoluble oligonucleotides, which are then degraded further into small acid-soluble oligonucleotides. This Burkholderia ambifaria (strain MC40-6) protein is Exodeoxyribonuclease 7 small subunit.